The chain runs to 249 residues: Molybdate/tungstate transport system permease protein WtpB (249 aa).

Residues 1–10 (MDRRDYLAYA) are Cytoplasmic-facing. The chain crosses the membrane as a helical span at residues 11–31 (FAGLGAFLVAFIGLPLFMIFI). Residues 32–56 (KQAYDLEALQRTLVDPLVIESIRNS) lie on the Extracellular side of the membrane. In terms of domain architecture, ABC transmembrane type-1 spans 53 to 239 (IRNSLFTATV…TISLAVFIFL (187 aa)). Residues 57–77 (LFTATVSTLLGILFGVPLGYV) form a helical membrane-spanning segment. Residues 78-96 (LARKEFKGKNFVQALIDTP) lie on the Cytoplasmic side of the membrane. Residues 97 to 117 (IVIPHSVVGIMLLVTFSDAIL) traverse the membrane as a helical segment. A topological domain (extracellular) is located at residue D118. Residues 119 to 139 (NYKGIVAVMLFVSSPFIVNSA) form a helical membrane-spanning segment. Over 140–179 (RDGFLSVDEKLEYVARTLGASGLRTFFSVTLPNAIHSIAS) the chain is Cytoplasmic. A helical transmembrane segment spans residues 180 to 200 (GAIMAWARAISEVGAILIVAY). Topologically, residues 201–223 (YPKTAQVLIMEYFNNYGLRASRP) are extracellular. The chain crosses the membrane as a helical span at residues 224 to 244 (IAVILVTISLAVFIFLRWLVG). The Cytoplasmic portion of the chain corresponds to 245 to 249 (RGRNA).

This sequence belongs to the binding-protein-dependent transport system permease family. The complex is composed of two ATP-binding proteins (WtpC), two transmembrane proteins (WtpB) and a solute-binding protein (WtpA).

The protein localises to the cell membrane. Its function is as follows. Part of the ABC transporter complex WtpABC involved in molybdate/tungstate import. Probably responsible for the translocation of the substrate across the membrane. In Pyrococcus furiosus (strain ATCC 43587 / DSM 3638 / JCM 8422 / Vc1), this protein is Molybdate/tungstate transport system permease protein WtpB.